Consider the following 151-residue polypeptide: Inorganic triphosphatase (151 aa).

A CYTH domain is found at 1 to 148 (MTEIERKFLV…KRYKNKALAL (148 aa)). Catalysis depends on Tyr27, which acts as the Proton acceptor.

As to quaternary structure, homodimer.

The catalysed reaction is triphosphate + H2O = phosphate + diphosphate. With respect to regulation, activated by magnesium and mangenese ions, and inhibited by calcium, zinc and copper ions. In terms of biological role, involved in the hydrolysis of the beta-gamma-phosphoanhydride linkage of triphosphate-containing substrates (inorganic or nucleoside-linked). Catalyzes the hydrolysis of inorganic triphosphate (PPPi). The enzyme has a strong preference for linear PPPi compared with cyclic PPPi (cyclic trimetaphosphate) and to the linear P4. The longer chains polyphosphate are not hydrolyzed. It has only a slight thiamine triphosphatase (ThTPase) activity. Nucleoside triphosphatase activity is negligible in the presence of magnesium, but a small activity is observed in the presence of manganese, in particular with GTP. This is Inorganic triphosphatase from Nitrosomonas europaea (strain ATCC 19718 / CIP 103999 / KCTC 2705 / NBRC 14298).